The sequence spans 362 residues: Tyrosine-protein kinase SRK2 (362 aa).

An SH2 domain is found at 1 to 70; it reads TFLVRESESK…GLCVNLRQPC (70 aa). A Protein kinase domain is found at 95 to 348; it reads ITLIRKLGAG…ALQWRLEDFF (254 aa). Residues 101–109 and K123 each bind ATP; that span reads LGAGQFGEV. Residue D214 is the Proton acceptor of the active site.

It belongs to the protein kinase superfamily. Tyr protein kinase family.

The protein localises to the cytoplasm. The enzyme catalyses L-tyrosyl-[protein] + ATP = O-phospho-L-tyrosyl-[protein] + ADP + H(+). The sequence is that of Tyrosine-protein kinase SRK2 (SRK2) from Spongilla lacustris (Freshwater sponge).